A 101-amino-acid chain; its full sequence is Small ribosomal subunit protein uS14 (101 aa).

The protein belongs to the universal ribosomal protein uS14 family. In terms of assembly, part of the 30S ribosomal subunit. Contacts proteins S3 and S10.

Binds 16S rRNA, required for the assembly of 30S particles and may also be responsible for determining the conformation of the 16S rRNA at the A site. This Maricaulis maris (strain MCS10) (Caulobacter maris) protein is Small ribosomal subunit protein uS14.